The sequence spans 158 residues: Crossover junction endodeoxyribonuclease RuvC (158 aa).

Catalysis depends on residues aspartate 7, glutamate 67, and aspartate 139. Mg(2+) contacts are provided by aspartate 7, glutamate 67, and aspartate 139.

This sequence belongs to the RuvC family. In terms of assembly, homodimer which binds Holliday junction (HJ) DNA. The HJ becomes 2-fold symmetrical on binding to RuvC with unstacked arms; it has a different conformation from HJ DNA in complex with RuvA. In the full resolvosome a probable DNA-RuvA(4)-RuvB(12)-RuvC(2) complex forms which resolves the HJ. Mg(2+) serves as cofactor.

It is found in the cytoplasm. The enzyme catalyses Endonucleolytic cleavage at a junction such as a reciprocal single-stranded crossover between two homologous DNA duplexes (Holliday junction).. The RuvA-RuvB-RuvC complex processes Holliday junction (HJ) DNA during genetic recombination and DNA repair. Endonuclease that resolves HJ intermediates. Cleaves cruciform DNA by making single-stranded nicks across the HJ at symmetrical positions within the homologous arms, yielding a 5'-phosphate and a 3'-hydroxyl group; requires a central core of homology in the junction. The consensus cleavage sequence is 5'-(A/T)TT(C/G)-3'. Cleavage occurs on the 3'-side of the TT dinucleotide at the point of strand exchange. HJ branch migration catalyzed by RuvA-RuvB allows RuvC to scan DNA until it finds its consensus sequence, where it cleaves and resolves the cruciform DNA. This is Crossover junction endodeoxyribonuclease RuvC from Prochlorococcus marinus (strain MIT 9211).